The chain runs to 400 residues: Vitamin K-dependent protein Z (400 aa).

The first 23 residues, 1–23 (MAGCVPLLQGLVLVLALHRVEPS), serve as a signal peptide directing secretion. A propeptide spanning residues 24 to 40 (VFLPASKANDVLVRWKR) is cleaved from the precursor. Residues 41–86 (AGSYLLEELFEGNLEKECYEEICVYEEAREVFENEVVTDEFWRRYK) enclose the Gla domain. A 4-carboxyglutamate mark is found at Glu47, Glu48, Glu51, Glu55, Glu57, Glu60, Glu61, Glu66, Glu67, Glu70, Glu73, Glu75, and Glu80. Cysteines 58 and 63 form a disulfide. EGF-like domains lie at 87–123 (GGSP…SNCE) and 125–166 (AKNE…KQCV). Cystine bridges form between Cys91–Cys102, Cys96–Cys111, Cys113–Cys122, Cys129–Cys141, Cys137–Cys150, Cys152–Cys165, and Cys203–Cys219. An O-linked (Glc...) serine glycan is attached at Ser93. An N-linked (GlcNAc...) asparagine glycan is attached at Asn99. Asp104 is subject to (3R)-3-hydroxyaspartate. The 226-residue stretch at 175–400 (VLTSEKRAPD…YSLWFKQIMN (226 aa)) folds into the Peptidase S1 domain. N-linked (GlcNAc...) asparagine glycosylation is found at Asn225, Asn233, Asn306, and Asn332. The cysteines at positions 327 and 341 are disulfide-linked.

It belongs to the peptidase S1 family. In terms of assembly, interacts with SERPINA10. The iron and 2-oxoglutarate dependent 3-hydroxylation of aspartate and asparagine is (R) stereospecific within EGF domains. Plasma.

It is found in the secreted. In terms of biological role, appears to assist hemostasis by binding thrombin and promoting its association with phospholipid vesicles. Inhibits activity of the coagulation protease factor Xa in the presence of SERPINA10, calcium and phospholipids. The chain is Vitamin K-dependent protein Z (PROZ) from Homo sapiens (Human).